The primary structure comprises 142 residues: Large ribosomal subunit protein uL16 (142 aa).

Belongs to the universal ribosomal protein uL16 family. Part of the 50S ribosomal subunit.

In terms of biological role, binds 23S rRNA and is also seen to make contacts with the A and possibly P site tRNAs. The protein is Large ribosomal subunit protein uL16 of Fervidobacterium nodosum (strain ATCC 35602 / DSM 5306 / Rt17-B1).